A 302-amino-acid chain; its full sequence is Glycine--tRNA ligase alpha subunit (302 aa).

The protein belongs to the class-II aminoacyl-tRNA synthetase family. In terms of assembly, tetramer of two alpha and two beta subunits.

It is found in the cytoplasm. It carries out the reaction tRNA(Gly) + glycine + ATP = glycyl-tRNA(Gly) + AMP + diphosphate. In Xanthomonas euvesicatoria pv. vesicatoria (strain 85-10) (Xanthomonas campestris pv. vesicatoria), this protein is Glycine--tRNA ligase alpha subunit.